A 1620-amino-acid polypeptide reads, in one-letter code: Probable serine/threonine-protein kinase gdt4 (1620 aa).

Positions 1–19 (MKLEQRIFFLICLVINSFS) are cleaved as a signal peptide. The Extracellular segment spans residues 20–891 (NCSLLVAPDG…EVIGINEQLN (872 aa)). The helical transmembrane segment at 892 to 912 (ILAIVLPITISLFAAASILAG) threads the bilayer. Residues 913 to 1620 (YLVIKKYKKP…AKRNKKNQNQ (708 aa)) are Cytoplasmic-facing. Residues 1349-1604 (IVLEKYLSEG…TLIDLLEKLL (256 aa)) form the Protein kinase domain. ATP-binding positions include 1355-1363 (LSEGSFGVV) and Lys1376. Asp1466 serves as the catalytic Proton acceptor.

This sequence in the N-terminal section; belongs to the GDT family. The protein in the C-terminal section; belongs to the protein kinase superfamily. TKL Ser/Thr protein kinase family.

The protein resides in the membrane. It carries out the reaction L-seryl-[protein] + ATP = O-phospho-L-seryl-[protein] + ADP + H(+). The catalysed reaction is L-threonyl-[protein] + ATP = O-phospho-L-threonyl-[protein] + ADP + H(+). The sequence is that of Probable serine/threonine-protein kinase gdt4 (gdt4) from Dictyostelium discoideum (Social amoeba).